Consider the following 951-residue polypeptide: Valine--tRNA ligase (951 aa).

The 'HIGH' region motif lies at 42–52; it reads PNVTGSLHMGH. The 'KMSKS' region motif lies at 554-558; it reads KMSKS. Lys-557 provides a ligand contact to ATP. A coiled-coil region spans residues 880–944; sequence AGLINKEDEL…AEAKAKLIEQ (65 aa).

The protein belongs to the class-I aminoacyl-tRNA synthetase family. ValS type 1 subfamily. In terms of assembly, monomer.

It is found in the cytoplasm. It catalyses the reaction tRNA(Val) + L-valine + ATP = L-valyl-tRNA(Val) + AMP + diphosphate. Its function is as follows. Catalyzes the attachment of valine to tRNA(Val). As ValRS can inadvertently accommodate and process structurally similar amino acids such as threonine, to avoid such errors, it has a 'posttransfer' editing activity that hydrolyzes mischarged Thr-tRNA(Val) in a tRNA-dependent manner. This chain is Valine--tRNA ligase, found in Escherichia coli O6:H1 (strain CFT073 / ATCC 700928 / UPEC).